Here is an 860-residue protein sequence, read N- to C-terminus: Leucine--tRNA ligase (860 aa).

Positions 42 to 52 match the 'HIGH' region motif; it reads PYPSGRLHMGH. The 'KMSKS' region motif lies at 619–623; the sequence is KMSKS. Position 622 (lysine 622) interacts with ATP.

The protein belongs to the class-I aminoacyl-tRNA synthetase family.

It is found in the cytoplasm. The enzyme catalyses tRNA(Leu) + L-leucine + ATP = L-leucyl-tRNA(Leu) + AMP + diphosphate. This is Leucine--tRNA ligase from Salmonella typhi.